The chain runs to 387 residues: Phosphoglycerate kinase (387 aa).

Substrate contacts are provided by residues 21 to 23, R36, 59 to 62, R113, and R146; these read DLN and HLGR. ATP contacts are provided by residues K197, E314, and 340–343; that span reads GGDT.

Belongs to the phosphoglycerate kinase family. Monomer.

Its subcellular location is the cytoplasm. It carries out the reaction (2R)-3-phosphoglycerate + ATP = (2R)-3-phospho-glyceroyl phosphate + ADP. It functions in the pathway carbohydrate degradation; glycolysis; pyruvate from D-glyceraldehyde 3-phosphate: step 2/5. The chain is Phosphoglycerate kinase from Enterobacter sp. (strain 638).